The following is a 137-amino-acid chain: MRHYEIVFLVHPDQSEQVPGMIERYTGILTQAGGQIHRLEDWGRRQLAYPIIELHKAHYVLMNVETTAESVEELETAFRFNDAVLRSMVMRTKAAITEASPMAKAKDERDTRRSSEERAPRAEATEEVKESAENTAE.

The disordered stretch occupies residues 96–137 (ITEASPMAKAKDERDTRRSSEERAPRAEATEEVKESAENTAE). Over residues 104–137 (KAKDERDTRRSSEERAPRAEATEEVKESAENTAE) the composition is skewed to basic and acidic residues.

It belongs to the bacterial ribosomal protein bS6 family.

Binds together with bS18 to 16S ribosomal RNA. This Shewanella piezotolerans (strain WP3 / JCM 13877) protein is Small ribosomal subunit protein bS6.